The chain runs to 214 residues: Zinc finger protein 11 (214 aa).

Positions 1–27 are disordered; that stretch reads MKRTHLASFSNRDKTQEEEGEDGNGDN. The segment at 49–71 adopts a C2H2-type zinc-finger fold; it reads YTCSFCRREFRSAQALGGHMNVH. A Nuclear localization signal motif is present at residues 72–79; sequence RRDRAKLR. The disordered stretch occupies residues 89-130; the sequence is HHHTPIANPNPNFSSSSSSSTTTAHLEPSLTNQRSKTTPFPS. Residues 102-111 are compositionally biased toward low complexity; it reads SSSSSSSTTT. Residues 117–128 show a composition bias toward polar residues; it reads SLTNQRSKTTPF.

As to expression, expressed in roots, stems, axillary buds and flowers.

The protein resides in the nucleus. Its function is as follows. Probable transcription factor that may regulate cell division and growth. This chain is Zinc finger protein 11, found in Arabidopsis thaliana (Mouse-ear cress).